The primary structure comprises 1902 residues: Plexin-B3 (1902 aa).

A signal peptide spans 1-34; sequence MLTDFLQAPVMAPWSPFSLHLLLLFLLLLPLTRA. Residues 35 to 461 enclose the Sema domain; it reads HRFSVPNASF…TAQQVDRILV (427 aa). Topologically, residues 35-1245 are extracellular; the sequence is HRFSVPNASF…MISTFPVEAQ (1211 aa). Residue N41 is glycosylated (N-linked (GlcNAc...) asparagine). Intrachain disulfides connect C88/C97 and C122/C130. N221 carries an N-linked (GlcNAc...) asparagine glycan. 3 disulfides stabilise this stretch: C257-C360, C273-C305, and C323-C347. Residues 353–372 are disordered; the sequence is DSPESYPCGDEHTPSPIAGR. N-linked (GlcNAc...) asparagine glycosylation is found at N416 and N469. In terms of domain architecture, PSI 1 spans 463–515; that stretch reads ACPQFPNCTTCLQARDPLCGWCILQGRCTRRAECGRAVQPNQWLWSYEDNHCL. Cystine bridges form between C464-C481, C470-C514, C473-C490, C484-C496, and C551-C569. 2 consecutive PSI domains span residues 609 to 671 and 776 to 822; these read DCSA…EACP and DCAM…QLCP. N-linked (GlcNAc...) asparagine glycosylation is found at N791, N889, N946, N1090, and N1207. 3 IPT/TIG domains span residues 824 to 913, 915 to 1001, and 1003 to 1134; these read PSID…HFTY, DPVL…FRYT, and NPQL…FLYQ. The helical transmembrane segment at 1246–1266 threads the bilayer; that stretch reads VGLGMGAAMLIAAVLLLTLMY. Over 1267-1902 the chain is Cytoplasmic; sequence RHKSKQALRD…ALVEYKVTDL (636 aa).

This sequence belongs to the plexin family. In terms of assembly, binds MET and MST1R. Interacts with RIT2/RIN. Interacts (via cytoplasmic domain) with FSCN1 and RAC1. May form homodimers (via Sema domain). Interacts (via cytoplasmic domain) with ARHGDIA. Expressed in glioma cells (at protein level). Expressed in glioma cells and oligodendrocyte precursor cells.

The protein resides in the cell membrane. Functionally, receptor for SEMA5A that plays a role in axon guidance, invasive growth and cell migration. Stimulates neurite outgrowth and mediates Ca(2+)/Mg(2+)-dependent cell aggregation. In glioma cells, SEMA5A stimulation of PLXNB3 results in the disassembly of F-actin stress fibers, disruption of focal adhesions and cellular collapse as well as inhibition of cell migration and invasion through ARHGDIA-mediated inactivation of RAC1. The protein is Plexin-B3 (Plxnb3) of Rattus norvegicus (Rat).